Reading from the N-terminus, the 355-residue chain is Chorismate synthase (355 aa).

Arg48 provides a ligand contact to NADP(+). Residues 125-127 (RSS), 239-240 (NA), Gly280, 295-299 (KPVAT), and Arg321 each bind FMN.

It belongs to the chorismate synthase family. As to quaternary structure, homotetramer. FMNH2 is required as a cofactor.

The catalysed reaction is 5-O-(1-carboxyvinyl)-3-phosphoshikimate = chorismate + phosphate. It functions in the pathway metabolic intermediate biosynthesis; chorismate biosynthesis; chorismate from D-erythrose 4-phosphate and phosphoenolpyruvate: step 7/7. Its function is as follows. Catalyzes the anti-1,4-elimination of the C-3 phosphate and the C-6 proR hydrogen from 5-enolpyruvylshikimate-3-phosphate (EPSP) to yield chorismate, which is the branch point compound that serves as the starting substrate for the three terminal pathways of aromatic amino acid biosynthesis. This reaction introduces a second double bond into the aromatic ring system. The chain is Chorismate synthase from Flavobacterium psychrophilum (strain ATCC 49511 / DSM 21280 / CIP 103535 / JIP02/86).